Here is a 182-residue protein sequence, read N- to C-terminus: ATP-dependent protease subunit HslV (182 aa).

The active site involves Thr-12. Residues Gly-167, Cys-170, and Thr-173 each contribute to the Na(+) site.

It belongs to the peptidase T1B family. HslV subfamily. A double ring-shaped homohexamer of HslV is capped on each side by a ring-shaped HslU homohexamer. The assembly of the HslU/HslV complex is dependent on binding of ATP.

The protein localises to the cytoplasm. It carries out the reaction ATP-dependent cleavage of peptide bonds with broad specificity.. With respect to regulation, allosterically activated by HslU binding. In terms of biological role, protease subunit of a proteasome-like degradation complex believed to be a general protein degrading machinery. This Acidiphilium cryptum (strain JF-5) protein is ATP-dependent protease subunit HslV.